The sequence spans 145 residues: Leghemoglobin-1 (145 aa).

The region spanning 3–145 (AFSDKQEALV…ELAAAIKKAY (143 aa)) is the Globin domain. 2 positions are modified to nitrated tyrosine: Y26 and Y31. S46 is a binding site for heme b. S46 is modified (phosphoserine). An O2-binding site is contributed by H62. Residues K65, H93, and K96 each contribute to the heme b site. The residue at position 134 (Y134) is a Nitrated tyrosine.

It belongs to the plant globin family. Monomer. Nitrated in effective nodules and particularly in hypoxic conditions; this mechanism may play a protective role in the symbiosis by buffering toxic peroxynitrite NO(2)(-). Nitration level decrease during nodule senescence. Post-translationally, phosphorylation at Ser-46 disrupts the molecular environment of its porphyrin ring oxygen binding pocket, thus leading to a reduced oxygen consumption and to the delivery of oxygen O(2) to symbiosomes. In terms of tissue distribution, root nodules.

The protein resides in the cytoplasm. The protein localises to the cytosol. It is found in the nucleus. Functionally, leghemoglobin that reversibly binds oxygen O(2) through a pentacoordinated heme iron. In root nodules, facilitates the diffusion of oxygen to the bacteroids while preventing the bacterial nitrogenase from being inactivated by buffering dioxygen, nitric oxide and carbon monoxide, and promoting the formation of reactive oxygen species (ROS, e.g. H(2)O(2)). This role is essential for symbiotic nitrogen fixation (SNF). The protein is Leghemoglobin-1 of Vigna unguiculata (Cowpea).